The sequence spans 85 residues: U4-theraphotoxin-Hhn1ab (85 aa).

Positions 1 to 22 are cleaved as a signal peptide; the sequence is MKVTLIAILTCAAVLVLHTTAA. Residues 23–48 constitute a propeptide that is removed on maturation; that stretch reads EELEAESQLMEVGMPDTELAAVDEER. Intrachain disulfides connect Cys-56/Cys-77 and Cys-71/Cys-82.

This sequence belongs to the neurotoxin 12 (Hwtx-2) family. 02 (Hwtx-2) subfamily. As to expression, expressed by the venom gland.

The protein resides in the secreted. Postsynaptic neurotoxin. This Cyriopagopus hainanus (Chinese bird spider) protein is U4-theraphotoxin-Hhn1ab.